Reading from the N-terminus, the 1719-residue chain is Cilia- and flagella-associated protein 43 (1719 aa).

Residues 94–120 form a disordered region; sequence VREEGAGGGADKPSGSGAVSGKQQSSG. 6 WD repeats span residues 122–165, 174–214, 226–263, 308–345, 413–452, and 513–552; these read SVVL…GRCR, SSTS…EKAV, PAGAEVTCHAWGPGGLYVGTSTGGLVLLDTATMAPLQL, TSGAAVTALTLNRDLVAVAGADGSVRVFVSVPAAAAAI, CHVGRLAGVVPHPGGGAFLTTGSDGSVRVWSTTDGALLGR, and LHSAPVDVLVFSPANDLLLSAGRDGIAWLCSVDARGGRVR. The segment at 569–596 is disordered; it reads TWPRSDGGSGAASGHAQAGPVSTTSAEG. 2 WD repeats span residues 697 to 736 and 749 to 788; these read AHARASGGVAVAPGGHLLASGAADGTVALRNMSLITLAAQ and ITAGGVVTVSFDATGRYLASAGADGALFVYELSKRAAVAN. The disordered stretch occupies residues 1022–1045; the sequence is RAKQEAARKADEDAAKRSAKDNAG. The stretch at 1073-1114 is one WD 9 repeat; the sequence is PKPAWLVALGVEPDAVNPKLITEEQNRELKEWQAKEKSLQEE. 3 disordered regions span residues 1220–1269, 1277–1296, and 1325–1372; these read MPGG…AAAA, ATAAGGAGSSGGAAPCGAAG, and TLNP…AAAA. Residues 1221 to 1233 show a composition bias toward gly residues; that stretch reads PGGGAIGAAGGHQ. Residues 1257–1269 show a composition bias toward low complexity; sequence ASLAHSPSGAAAA. Residues 1344–1358 show a composition bias toward low complexity; the sequence is SSALHPSHSHASVHG. 2 coiled-coil regions span residues 1524–1609 and 1651–1679; these read AAQW…RSAQ and HKKLKEIALAQQNELGELRQQLEKLRLRT. A disordered region spans residues 1685–1719; it reads ESGAVAGMPSPPRRLPPDIKLLAGSPSSSSVAGRT. The segment covering 1709 to 1719 has biased composition (polar residues); it reads SPSSSSVAGRT.

The protein belongs to the CFAP43 family.

Its subcellular location is the cell projection. The protein localises to the cilium. It is found in the flagellum. The protein resides in the cytoplasm. It localises to the cytoskeleton. Its subcellular location is the flagellum axoneme. Its function is as follows. Flagellar protein involved in flagellum axoneme organization and function. This is Cilia- and flagella-associated protein 43 from Chlamydomonas reinhardtii (Chlamydomonas smithii).